A 275-amino-acid polypeptide reads, in one-letter code: Large ribosomal subunit protein uL2c (275 aa).

The interval 223–255 is disordered; sequence VVMNPVDHPHGGGEGRAPIGRSRPVTPWGRPAL.

It belongs to the universal ribosomal protein uL2 family. Part of the 50S ribosomal subunit.

The protein resides in the plastid. It is found in the chloroplast. The protein is Large ribosomal subunit protein uL2c (rpl2) of Pleurastrum terricola (Filamentous green alga).